Consider the following 146-residue polypeptide: uncharacterized protein (146 aa).

Residues 31–119 (EKVMIVEGKS…RAYKEVAAAP (89 aa)) enclose the Toprim domain.

This is an uncharacterized protein from Bacillus subtilis (strain 168).